A 370-amino-acid polypeptide reads, in one-letter code: tRNA/tmRNA (uracil-C(5))-methyltransferase (370 aa).

S-adenosyl-L-methionine is bound by residues Gln-195, Tyr-221, Asn-226, Glu-242, and Asp-302. The Nucleophile role is filled by Cys-327. The active-site Proton acceptor is the Glu-361.

It belongs to the class I-like SAM-binding methyltransferase superfamily. RNA M5U methyltransferase family. TrmA subfamily.

It carries out the reaction uridine(54) in tRNA + S-adenosyl-L-methionine = 5-methyluridine(54) in tRNA + S-adenosyl-L-homocysteine + H(+). It catalyses the reaction uridine(341) in tmRNA + S-adenosyl-L-methionine = 5-methyluridine(341) in tmRNA + S-adenosyl-L-homocysteine + H(+). Its function is as follows. Dual-specificity methyltransferase that catalyzes the formation of 5-methyluridine at position 54 (m5U54) in all tRNAs, and that of position 341 (m5U341) in tmRNA (transfer-mRNA). The polypeptide is tRNA/tmRNA (uracil-C(5))-methyltransferase (Wolinella succinogenes (strain ATCC 29543 / DSM 1740 / CCUG 13145 / JCM 31913 / LMG 7466 / NCTC 11488 / FDC 602W) (Vibrio succinogenes)).